A 379-amino-acid chain; its full sequence is Flagellin A (379 aa).

2 coiled-coil regions span residues 104–129 (NSASERQALNEESVALQDELNRIAET) and 314–341 (QNRLSHSISNLSNIQENVEASKSRIKDT).

This sequence belongs to the bacterial flagellin family. As to quaternary structure, heteromer of multiple flagellin subunits including FlaA, FlaB, FlaC, FlaD and FlaE.

Its subcellular location is the secreted. It is found in the bacterial flagellum. Functionally, flagellin is the subunit protein which polymerizes to form the filaments of bacterial flagella. FlaA is required to form a core or scaffold into which the other flagellins are inserted to provide structural integrity. Essential for flagellar synthesis and motility; important for full virulence. The chain is Flagellin A (flaA) from Vibrio cholerae serotype O1 (strain ATCC 39541 / Classical Ogawa 395 / O395).